Here is a 538-residue protein sequence, read N- to C-terminus: Mitochondria-eating protein (538 aa).

Positions 1-273 (MAENLKRLVS…PRSRSCSRSR (273 aa)) are interaction with YWHAG/14-3-3 protein gamma. Serine 85 carries the phosphoserine modification. Positions 97-137 (SKVPSLQDTFDRERHKDPSPRDRDMQQLDSNLNSTRSQCNQ) are disordered. Basic and acidic residues predominate over residues 105–122 (TFDRERHKDPSPRDRDMQ). 2 coiled-coil regions span residues 118-187 (DRDM…RHRN) and 219-256 (DQQD…RSSR). Residues 123 to 137 (QLDSNLNSTRSQCNQ) show a composition bias toward polar residues. Residues serine 156 and serine 159 each carry the phosphoserine modification. Disordered stretches follow at residues 173–226 (QLKS…TEAM) and 247–294 (KSAL…SKLS). Residues 181 to 210 (EDARHRNTDQRSSENRRSEPWSLEERKREQ) show a composition bias toward basic and acidic residues. Residues 211–224 (WNSLKQNADQQDTE) show a composition bias toward polar residues. The segment covering 253 to 278 (RSSRSRSPSPAPRSRSCSRSRSASPS) has biased composition (low complexity). Residues serine 287 and serine 509 each carry the phosphoserine modification.

This sequence belongs to the MIEAP family. As to quaternary structure, interacts (via coiled-coil domains) with BNIP3L (via BH3 domain). Interacts (via coiled-coil domains) with BNIP3 (via BH3 domain). In terms of assembly, interacts with YWHAG/14-3-3 protein gamma; a protein that also plays a role in MALM.

The protein resides in the cytoplasm. It is found in the cytosol. Its subcellular location is the mitochondrion outer membrane. It localises to the mitochondrion matrix. Functionally, key regulator of mitochondrial quality that mediates the repairing or degradation of unhealthy mitochondria in response to mitochondrial damage. Mediator of mitochondrial protein catabolic process (also named MALM) by mediating the degradation of damaged proteins inside mitochondria by promoting the accumulation in the mitochondrial matrix of hydrolases that are characteristic of the lysosomal lumen. Also involved in mitochondrion degradation of damaged mitochondria by promoting the formation of vacuole-like structures (named MIV), which engulf and degrade unhealthy mitochondria by accumulating lysosomes. The physical interaction of SPATA18/MIEAP, BNIP3 and BNIP3L/NIX at the mitochondrial outer membrane regulates the opening of a pore in the mitochondrial double membrane in order to mediate the translocation of lysosomal proteins from the cytoplasm to the mitochondrial matrix. Binds cardiolipin. May form molecular condensates (non-membrane-bounded organelles) within mitochondria that compartmentalize and promote cardiolipin metabolism. The chain is Mitochondria-eating protein (SPATA18) from Homo sapiens (Human).